We begin with the raw amino-acid sequence, 79 residues long: RNA-binding protein KhpA (79 aa).

Positions 30 to 79 (GRVLEVRVHPDDLGKVIGRNGRTARALRTVVGAIGGRGVRVDLVDVDHVR) constitute a KH domain.

It belongs to the KhpA RNA-binding protein family.

It is found in the cytoplasm. It localises to the nucleoid. Functionally, a probable RNA-binding protein. The protein is RNA-binding protein KhpA of Streptomyces coelicolor (strain ATCC BAA-471 / A3(2) / M145).